The following is a 349-amino-acid chain: NADH-quinone oxidoreductase subunit H (349 aa).

The next 8 helical transmembrane spans lie at 16–36, 88–108, 123–143, 157–177, 202–222, 264–284, 285–305, and 325–345; these read WPVV…MGCV, GLFI…WAVV, LLFL…AGWA, AAQM…VLLI, FLSW…ISGI, ILVS…PVGF, LPDG…IFLW, and VFIP…MSPL.

This sequence belongs to the complex I subunit 1 family. In terms of assembly, NDH-1 is composed of 14 different subunits. Subunits NuoA, H, J, K, L, M, N constitute the membrane sector of the complex.

It localises to the cell inner membrane. The catalysed reaction is a quinone + NADH + 5 H(+)(in) = a quinol + NAD(+) + 4 H(+)(out). Functionally, NDH-1 shuttles electrons from NADH, via FMN and iron-sulfur (Fe-S) centers, to quinones in the respiratory chain. The immediate electron acceptor for the enzyme in this species is believed to be ubiquinone. Couples the redox reaction to proton translocation (for every two electrons transferred, four hydrogen ions are translocated across the cytoplasmic membrane), and thus conserves the redox energy in a proton gradient. This subunit may bind ubiquinone. The sequence is that of NADH-quinone oxidoreductase subunit H from Azoarcus sp. (strain BH72).